The primary structure comprises 317 residues: Lysosomal-associated transmembrane protein 4B (317 aa).

Residues 25–73 (AFGAKGTDPAEARSSRGIEEAGPRAHGRAGREPERRRSRQQRRGGLQAR) are disordered. Basic and acidic residues predominate over residues 32-59 (DPAEARSSRGIEEAGPRAHGRAGREPER). The next 4 membrane-spanning stretches (helical) occupy residues 117-137 (ILLGVWYLIINAVVLLILLSA), 163-183 (MCIAIAISLLMILICAMATYG), 191-211 (WIIPFFCYQIFDFALNMLVAI), and 244-264 (CLVLIILLFISIILTFKGYLI). The segment at 205–221 (LNMLVAITVLIYPNSIQ) is required for NEDD4 interaction.

This sequence belongs to the LAPTM4/LAPTM5 transporter family. Homooligomer; upon reaching the lysosomes. Interacts with MCOLN1. Interacts with NEDD4; may play a role in the lysosomal sorting of LAPTM4B; enhances HGS association with NEDD4; mediates inhibition of EGFR degradation. Interacts with PIP5K1C; promotes SNX5 association with LAPTM4B; kinase activity of PIP5K1C is required; interaction is regulated by phosphatidylinositol 4,5-bisphosphate generated by PIP5K1C. Interacts with HGS; promotes HGS ubiquitination. Interacts with SNX5. Interacts with SLC3A2 and SLC7A5; recruits SLC3A2 and SLC7A5 to lysosomes to promote leucine uptake into these organelles and is required for mTORC1 activation. Interacts with LRRC32; decreases TGFB1 production in regulatory T cells. Interacts with BECN1; competes with EGFR for LAPTM4B binding; regulates EGFR activity. Interacts with EGFR; positively correlates with EGFR activation. In terms of processing, undergoes proteolytic cleavage following delivery to the lysosomes. Ubiquitinated by NEDD4.

Its subcellular location is the endomembrane system. It localises to the late endosome membrane. The protein localises to the cell membrane. It is found in the cell projection. The protein resides in the lysosome membrane. Its subcellular location is the endosome membrane. It localises to the endosome. The protein localises to the multivesicular body membrane. It is found in the multivesicular body lumen. Functionally, required for optimal lysosomal function. Blocks EGF-stimulated EGFR intraluminal sorting and degradation. Conversely by binding with the phosphatidylinositol 4,5-bisphosphate, regulates its PIP5K1C interaction, inhibits HGS ubiquitination and relieves LAPTM4B inhibition of EGFR degradation. Recruits SLC3A2 and SLC7A5 (the Leu transporter) to the lysosome, promoting entry of leucine and other essential amino acid (EAA) into the lysosome, stimulating activation of proton-transporting vacuolar (V)-ATPase protein pump (V-ATPase) and hence mTORC1 activation. Plays a role as negative regulator of TGFB1 production in regulatory T cells. Binds ceramide and facilitates its exit from late endosome in order to control cell death pathways. In Homo sapiens (Human), this protein is Lysosomal-associated transmembrane protein 4B.